The chain runs to 886 residues: Alanine--tRNA ligase (886 aa).

His-568, His-572, Cys-670, and His-674 together coordinate Zn(2+).

This sequence belongs to the class-II aminoacyl-tRNA synthetase family. Zn(2+) is required as a cofactor.

The protein resides in the cytoplasm. The enzyme catalyses tRNA(Ala) + L-alanine + ATP = L-alanyl-tRNA(Ala) + AMP + diphosphate. Catalyzes the attachment of alanine to tRNA(Ala) in a two-step reaction: alanine is first activated by ATP to form Ala-AMP and then transferred to the acceptor end of tRNA(Ala). Also edits incorrectly charged Ser-tRNA(Ala) and Gly-tRNA(Ala) via its editing domain. The polypeptide is Alanine--tRNA ligase (Prochlorococcus marinus (strain NATL2A)).